Here is a 71-residue protein sequence, read N- to C-terminus: Translation initiation factor IF-1 (71 aa).

The S1-like domain maps to 1–71; the sequence is MAKQAAIEQD…LTKARITYRY (71 aa).

This sequence belongs to the IF-1 family. Component of the 30S ribosomal translation pre-initiation complex which assembles on the 30S ribosome in the order IF-2 and IF-3, IF-1 and N-formylmethionyl-tRNA(fMet); mRNA recruitment can occur at any time during PIC assembly.

It localises to the cytoplasm. One of the essential components for the initiation of protein synthesis. Stabilizes the binding of IF-2 and IF-3 on the 30S subunit to which N-formylmethionyl-tRNA(fMet) subsequently binds. Helps modulate mRNA selection, yielding the 30S pre-initiation complex (PIC). Upon addition of the 50S ribosomal subunit IF-1, IF-2 and IF-3 are released leaving the mature 70S translation initiation complex. In Christiangramia forsetii (strain DSM 17595 / CGMCC 1.15422 / KT0803) (Gramella forsetii), this protein is Translation initiation factor IF-1.